We begin with the raw amino-acid sequence, 160 residues long: Troponin C, skeletal muscle (160 aa).

Threonine 2 is modified (N-acetylthreonine). 4 consecutive EF-hand domains span residues 15–50 (EMIA…LGQT), 51–86 (PTKE…QMKE), 91–126 (KSEE…SGEH), and 127–160 (VTDE…EGVQ). 19 residues coordinate Ca(2+): aspartate 28, aspartate 30, aspartate 34, glutamate 39, aspartate 64, aspartate 66, serine 68, threonine 70, glutamate 75, aspartate 104, asparagine 106, aspartate 108, tyrosine 110, glutamate 115, aspartate 140, asparagine 142, aspartate 144, arginine 146, and glutamate 151.

Belongs to the troponin C family.

Its function is as follows. Troponin is the central regulatory protein of striated muscle contraction. Tn consists of three components: Tn-I which is the inhibitor of actomyosin ATPase, Tn-T which contains the binding site for tropomyosin and Tn-C. The binding of calcium to Tn-C abolishes the inhibitory action of Tn on actin filaments. This Homo sapiens (Human) protein is Troponin C, skeletal muscle (TNNC2).